The primary structure comprises 400 residues: Enoyl-[acyl-carrier-protein] reductase [NADH] (400 aa).

Residues 48–53 (GSSSGY), 74–75 (FE), 111–112 (DA), and 139–140 (LA) contribute to the NAD(+) site. Tyr225 contacts substrate. The active-site Proton donor is Tyr235. NAD(+) contacts are provided by residues Lys244 and 273-275 (VVT).

This sequence belongs to the TER reductase family. In terms of assembly, monomer.

The catalysed reaction is a 2,3-saturated acyl-[ACP] + NAD(+) = a (2E)-enoyl-[ACP] + NADH + H(+). It functions in the pathway lipid metabolism; fatty acid biosynthesis. In terms of biological role, involved in the final reduction of the elongation cycle of fatty acid synthesis (FAS II). Catalyzes the reduction of a carbon-carbon double bond in an enoyl moiety that is covalently linked to an acyl carrier protein (ACP). This chain is Enoyl-[acyl-carrier-protein] reductase [NADH], found in Aliivibrio fischeri (strain ATCC 700601 / ES114) (Vibrio fischeri).